The following is a 229-amino-acid chain: tRNA (guanine-N(7)-)-methyltransferase (229 aa).

Residues glutamate 62, glutamate 87, aspartate 114, and aspartate 137 each coordinate S-adenosyl-L-methionine. Residue aspartate 137 is part of the active site. Residue lysine 141 participates in substrate binding. The interval 143–148 (KHNKRR) is interaction with RNA. Substrate is bound by residues aspartate 173 and 208-211 (TKFE).

The protein belongs to the class I-like SAM-binding methyltransferase superfamily. TrmB family.

It catalyses the reaction guanosine(46) in tRNA + S-adenosyl-L-methionine = N(7)-methylguanosine(46) in tRNA + S-adenosyl-L-homocysteine. The protein operates within tRNA modification; N(7)-methylguanine-tRNA biosynthesis. Functionally, catalyzes the formation of N(7)-methylguanine at position 46 (m7G46) in tRNA. This Francisella tularensis subsp. novicida (strain U112) protein is tRNA (guanine-N(7)-)-methyltransferase.